A 356-amino-acid chain; its full sequence is Sensor protein BasS (356 aa).

Over 1–13 the chain is Cytoplasmic; that stretch reads MRFQRRAMTLRQR. A helical transmembrane segment spans residues 14–34; sequence LMLTIGLILLVFQLISTFWLW. Residues 35 to 64 lie on the Periplasmic side of the membrane; it reads HESTEQIQLFEQALRDNRNNDRHIMHEIRE. A helical membrane pass occupies residues 65 to 88; that stretch reads AVASLIVPGVFMVSLTLLICYQAV. Residues 89–141 form the HAMP domain; it reads RRITRPLAELQKELEARTADNLAPIAIHSSTLEIESVVSAINQLVTRLTTTLD. The Cytoplasmic segment spans residues 89 to 356; sequence RRITRPLAEL…TRAWVLLKKA (268 aa). The 208-residue stretch at 149-356 folds into the Histidine kinase domain; sequence DVAHELRTPL…TRAWVLLKKA (208 aa). Position 152 is a phosphohistidine; by autocatalysis (histidine 152).

In terms of processing, autophosphorylated.

It localises to the cell inner membrane. The catalysed reaction is ATP + protein L-histidine = ADP + protein N-phospho-L-histidine.. Its function is as follows. Member of the two-component regulatory system BasS/BasR. Autophosphorylates and activates BasR by phosphorylation. Plays a role in the adaptation of the organism to the host environment, in particular to neutrophils, and therefore it plays a role in virulence as well. This chain is Sensor protein BasS (basS), found in Salmonella typhimurium (strain LT2 / SGSC1412 / ATCC 700720).